Here is a 307-residue protein sequence, read N- to C-terminus: Glycerol-3-phosphate dehydrogenase [NAD(P)+] (307 aa).

4 residues coordinate NADPH: tryptophan 14, arginine 34, arginine 35, and lysine 82. The sn-glycerol 3-phosphate site is built by lysine 82 and glycine 110. Residue serine 114 participates in NADPH binding. Sn-glycerol 3-phosphate contacts are provided by lysine 165, aspartate 218, serine 228, arginine 229, and asparagine 230. Lysine 165 serves as the catalytic Proton acceptor. Arginine 229 provides a ligand contact to NADPH. Residue glutamate 255 coordinates NADPH.

It belongs to the NAD-dependent glycerol-3-phosphate dehydrogenase family.

It localises to the cytoplasm. The catalysed reaction is sn-glycerol 3-phosphate + NAD(+) = dihydroxyacetone phosphate + NADH + H(+). The enzyme catalyses sn-glycerol 3-phosphate + NADP(+) = dihydroxyacetone phosphate + NADPH + H(+). The protein operates within membrane lipid metabolism; glycerophospholipid metabolism. Catalyzes the reduction of the glycolytic intermediate dihydroxyacetone phosphate (DHAP) to sn-glycerol 3-phosphate (G3P), the key precursor for phospholipid synthesis. The chain is Glycerol-3-phosphate dehydrogenase [NAD(P)+] from Trichormus variabilis (strain ATCC 29413 / PCC 7937) (Anabaena variabilis).